The sequence spans 81 residues: ATP synthase subunit c, chloroplastic (81 aa).

A run of 2 helical transmembrane segments spans residues 3–23 (PLIS…ASIG) and 57–77 (LAFM…LLFA).

The protein belongs to the ATPase C chain family. In terms of assembly, F-type ATPases have 2 components, F(1) - the catalytic core - and F(0) - the membrane proton channel. F(1) has five subunits: alpha(3), beta(3), gamma(1), delta(1), epsilon(1). F(0) has four main subunits: a(1), b(1), b'(1) and c(10-14). The alpha and beta chains form an alternating ring which encloses part of the gamma chain. F(1) is attached to F(0) by a central stalk formed by the gamma and epsilon chains, while a peripheral stalk is formed by the delta, b and b' chains.

The protein resides in the plastid. Its subcellular location is the chloroplast thylakoid membrane. F(1)F(0) ATP synthase produces ATP from ADP in the presence of a proton or sodium gradient. F-type ATPases consist of two structural domains, F(1) containing the extramembraneous catalytic core and F(0) containing the membrane proton channel, linked together by a central stalk and a peripheral stalk. During catalysis, ATP synthesis in the catalytic domain of F(1) is coupled via a rotary mechanism of the central stalk subunits to proton translocation. Functionally, key component of the F(0) channel; it plays a direct role in translocation across the membrane. A homomeric c-ring of between 10-14 subunits forms the central stalk rotor element with the F(1) delta and epsilon subunits. The polypeptide is ATP synthase subunit c, chloroplastic (Pinus koraiensis (Korean pine)).